Reading from the N-terminus, the 384-residue chain is Probable endopolygalacturonase C (384 aa).

The N-terminal stretch at Met1–Ala19 is a signal peptide. Positions Ala20–Lys40 are excised as a propeptide. The cysteines at positions 45 and 63 are disulfide-linked. 2 PbH1 repeats span residues Ser176–Glu207 and Ser208–Ser229. The active-site Proton donor is the Asp222. Cysteines 224 and 240 form a disulfide. His244 is an active-site residue. PbH1 repeat units lie at residues Arg254–Thr280 and Val288–Gln310. N-linked (GlcNAc...) asparagine glycosylation is present at Asn261. 2 cysteine pairs are disulfide-bonded: Cys349/Cys354 and Cys373/Cys382.

This sequence belongs to the glycosyl hydrolase 28 family.

The protein localises to the secreted. The enzyme catalyses (1,4-alpha-D-galacturonosyl)n+m + H2O = (1,4-alpha-D-galacturonosyl)n + (1,4-alpha-D-galacturonosyl)m.. Its function is as follows. Involved in maceration and soft-rotting of plant tissue. Hydrolyzes the 1,4-alpha glycosidic bonds of de-esterified pectate in the smooth region of the plant cell wall. The sequence is that of Probable endopolygalacturonase C (pgaC) from Aspergillus niger (strain ATCC MYA-4892 / CBS 513.88 / FGSC A1513).